Consider the following 810-residue polypeptide: Lon protease (810 aa).

Positions 8-201 (LPLLPLRGIL…KLCGIVAKEL (194 aa)) constitute a Lon N-terminal domain. Residue 353-360 (GPPGVGKT) coordinates ATP. The 182-residue stretch at 589–770 (NDEVGTVTGM…DQVLAIALLE (182 aa)) folds into the Lon proteolytic domain. Residues Ser676 and Lys719 contribute to the active site.

This sequence belongs to the peptidase S16 family. Homohexamer. Organized in a ring with a central cavity.

The protein resides in the cytoplasm. The enzyme catalyses Hydrolysis of proteins in presence of ATP.. ATP-dependent serine protease that mediates the selective degradation of mutant and abnormal proteins as well as certain short-lived regulatory proteins. Required for cellular homeostasis and for survival from DNA damage and developmental changes induced by stress. Degrades polypeptides processively to yield small peptide fragments that are 5 to 10 amino acids long. Binds to DNA in a double-stranded, site-specific manner. The protein is Lon protease of Desulforamulus reducens (strain ATCC BAA-1160 / DSM 100696 / MI-1) (Desulfotomaculum reducens).